The sequence spans 562 residues: Eukaryotic translation initiation factor 3 subunit L (562 aa).

Positions 1–29 (MSHAKEDYDSSYDPYSYQADYDGHTGDPK) are disordered. Low complexity predominate over residues 11 to 20 (SYDPYSYQAD). The PCI domain maps to 329 to 535 (DSIRVFANIL…IHIADTKVAR (207 aa)).

The protein belongs to the eIF-3 subunit L family. In terms of assembly, component of the eukaryotic translation initiation factor 3 (eIF-3) complex, which is composed of 13 subunits: eif3a, eif3b, eif3c, eif3d, eif3e, eif3f, eif3g, eif3h, eif3i, eif3j, eif3k, eif3l and eif3m.

It localises to the cytoplasm. Component of the eukaryotic translation initiation factor 3 (eIF-3) complex, which is involved in protein synthesis of a specialized repertoire of mRNAs and, together with other initiation factors, stimulates binding of mRNA and methionyl-tRNAi to the 40S ribosome. The eIF-3 complex specifically targets and initiates translation of a subset of mRNAs involved in cell proliferation. The sequence is that of Eukaryotic translation initiation factor 3 subunit L (eif3l) from Xenopus laevis (African clawed frog).